The following is a 463-amino-acid chain: MKKILVIGDLIADYYLWGKSERLSPEAPVPVLEVKKESKNLGGAANVANNLISLKAKVFLCGVVGDDLEGKHFISALKAREIDTSGILTDKTRCTTLKTRIIAQNQQIVRVDKEIKDPLNADLRKKLLDFFTEKIQEIDGVILSDYNKGVLDFELTQKMITLANQHHKLILCDPKGKDYSKYSHASLITPNRAELEHALHLKLDSHANLSKALQILKETYQIAMPLVTLSEQGIAFLEKGELVNCPTIAKEVYDVTGAGDTVIASLTLSLLESMSLKDACEFANAAAAVVVGKMGSALASLEEIALILNQTHPKILPLEKLLETLEHHQQKIVFTNGCFDLLHKGHASYLQKAKALGDILVVGLNSDNSIKRLKGNKRPIVSEKDRAFLLASLSCVDYVVVFEEDAPIKLIQALKPDILVKGADYLNKEVIGSEFAKETHLMEFEEGYSTSAIIEKIKRTHND.

The tract at residues M1 to I315 is ribokinase. N191 to E194 contacts ATP. Residue D260 is part of the active site. Positions F334 to D463 are cytidylyltransferase.

In the N-terminal section; belongs to the carbohydrate kinase PfkB family. The protein in the C-terminal section; belongs to the cytidylyltransferase family. In terms of assembly, homodimer.

The enzyme catalyses D-glycero-beta-D-manno-heptose 7-phosphate + ATP = D-glycero-beta-D-manno-heptose 1,7-bisphosphate + ADP + H(+). It catalyses the reaction D-glycero-beta-D-manno-heptose 1-phosphate + ATP + H(+) = ADP-D-glycero-beta-D-manno-heptose + diphosphate. Its pathway is nucleotide-sugar biosynthesis; ADP-L-glycero-beta-D-manno-heptose biosynthesis; ADP-L-glycero-beta-D-manno-heptose from D-glycero-beta-D-manno-heptose 7-phosphate: step 1/4. The protein operates within nucleotide-sugar biosynthesis; ADP-L-glycero-beta-D-manno-heptose biosynthesis; ADP-L-glycero-beta-D-manno-heptose from D-glycero-beta-D-manno-heptose 7-phosphate: step 3/4. Its function is as follows. Catalyzes the phosphorylation of D-glycero-D-manno-heptose 7-phosphate at the C-1 position to selectively form D-glycero-beta-D-manno-heptose-1,7-bisphosphate. In terms of biological role, catalyzes the ADP transfer from ATP to D-glycero-beta-D-manno-heptose 1-phosphate, yielding ADP-D-glycero-beta-D-manno-heptose. The protein is Bifunctional protein HldE of Helicobacter pylori (strain HPAG1).